The following is a 216-amino-acid chain: MOB kinase activator 3C (216 aa).

4 residues coordinate Zn(2+): Cys-82, Cys-87, His-164, and His-169.

Belongs to the MOB1/phocein family.

May regulate the activity of kinases. This chain is MOB kinase activator 3C (MOB3C), found in Bos taurus (Bovine).